Consider the following 220-residue polypeptide: RNA polymerase sigma GP28 factor (220 aa).

In terms of biological role, sigma factors are initiation factors that promote the attachment of RNA polymerase to specific initiation sites and are then released. This sigma factor is responsible for the expression of the phage middle genes. The sequence is that of RNA polymerase sigma GP28 factor (28) from Bacillus subtilis (Bacteriophage SP01).